Consider the following 419-residue polypeptide: MPLFALGINHQTASVALREKVAFSADLLLDAYQALLAQPTVLEAVIVSTCNRTEIYCHLKQDNCDEVIKWLCSFHQIEDHKLRPSLYCYSEYQAIQHLFRVSCGLDSLVLGEPQILGQIKQAFATAKQAKGVDKIVQKWFQHTFTVAKRVRTETQIGANAISVAFAAVCLAKQIFSDLSQSRVLLIGAGETIELVGKYLIEHQVPNITIANRTLSRAMALVEQFDAQAITLGEIPNHLAQADIIISSTASPLPIIGKGMVERALKARRNRPMLFIDIAVPRDIEAEVSELRDIYLYSVDDLQGIIEENKQARQVAALEAEKIIDGCIVDFISWIESLKAVESIRTYRQNSEQLRDDLLNRASAALQNGEEAENVLKELAFKLTNKLIHHPSLALNETARSGNDDELILLRNALGLSKKD.

Residues 49–52 (TCNR), Ser-107, 112–114 (EPQ), and Gln-118 contribute to the substrate site. Cys-50 serves as the catalytic Nucleophile. 187-192 (GAGETI) provides a ligand contact to NADP(+).

It belongs to the glutamyl-tRNA reductase family. As to quaternary structure, homodimer.

The catalysed reaction is (S)-4-amino-5-oxopentanoate + tRNA(Glu) + NADP(+) = L-glutamyl-tRNA(Glu) + NADPH + H(+). The protein operates within porphyrin-containing compound metabolism; protoporphyrin-IX biosynthesis; 5-aminolevulinate from L-glutamyl-tRNA(Glu): step 1/2. Its function is as follows. Catalyzes the NADPH-dependent reduction of glutamyl-tRNA(Glu) to glutamate 1-semialdehyde (GSA). The chain is Glutamyl-tRNA reductase from Psychromonas ingrahamii (strain DSM 17664 / CCUG 51855 / 37).